A 327-amino-acid chain; its full sequence is MTHSLRVIFAGTPEFAAAALAAIHEAGFPVPLVLTQPDRPAGRGMKLQASAVKRYALERGMAVAQPPSLRRAGKYPVEAVAALDLLHATPHDVMVVAAYGLLLPQEVLELPRHGCINIHASLLPRWRGAAPIHRAIEAGDAETGVTLMQMDAGLDTGAMLHEARVAIAPDDTTATLHDKLAAAGARLVVDALVELERTGALAATPQPADGVTYAEKIGKHEAALDWRKPAAALARQVRAFDPFPGGAGTLDGATLKLWAADAVPGRDDAAPGTIVDIGPDGVVIACGEGALRVTQLQKPGGKRLPAREFLAGAPLAVGQRFAPADAA.

121-124 provides a ligand contact to (6S)-5,6,7,8-tetrahydrofolate; the sequence is SLLP.

Belongs to the Fmt family.

The catalysed reaction is L-methionyl-tRNA(fMet) + (6R)-10-formyltetrahydrofolate = N-formyl-L-methionyl-tRNA(fMet) + (6S)-5,6,7,8-tetrahydrofolate + H(+). Attaches a formyl group to the free amino group of methionyl-tRNA(fMet). The formyl group appears to play a dual role in the initiator identity of N-formylmethionyl-tRNA by promoting its recognition by IF2 and preventing the misappropriation of this tRNA by the elongation apparatus. The sequence is that of Methionyl-tRNA formyltransferase from Burkholderia pseudomallei (strain 1106a).